The primary structure comprises 601 residues: Terpinolene synthase, chloroplastic (601 aa).

The N-terminal 32 residues, 1–32 (MSTFVISNSMHVGISFSFLHKLPQTPPPQVVC), are a transit peptide targeting the chloroplast. Mg(2+) contacts are provided by Asp-354, Asp-358, Asp-498, Thr-502, and Glu-506. The short motif at 354-358 (DDVYD) is the DDXXD motif element.

Belongs to the terpene synthase family. Tpsd subfamily. Mg(2+) is required as a cofactor. Requires Mn(2+) as cofactor.

The protein resides in the plastid. The protein localises to the chloroplast. The catalysed reaction is (2E)-geranyl diphosphate = terpinolene + diphosphate. The protein operates within secondary metabolite biosynthesis; terpenoid biosynthesis. Monoterpene synthase that catalyzes the formation of terpinolene and other monoterpenes from geranyl diphosphate. This Ocimum basilicum (Sweet basil) protein is Terpinolene synthase, chloroplastic (TES).